Reading from the N-terminus, the 525-residue chain is MSWHPQYRSSKFRHVFGKPASKENCYDSVPITHSVQDNHFCAVNPHFIAVVTECTGGGAFLVIPLHQTGKLDPHYPKVCGHRGNVLDVKWNPFNDFEIASCSEDATIKIWDIPKQLLTKNLTAFRKELVGHARKVGLVEWHPTAANILFSSGYDYKVMVWNLDSKESVIMSPVKTINCHQDVILSMSFNTNGSLLATACKDRKIRVLDPRAGTVLQEANYKGHRANKVLFLGNLKKLLSTGTSRWNNRQMALWDQDDLSVPVTEVDLDGSSGVLFPFYDADTNMLYVVGKGDRNIHYYEISANKPHLNYLMEYHSYNPQKGIGVMPKRGLDVSSCEIFRFYKLITTKSLIEPVSMIVPRRSESYQEDIYPPTASAQPSLTAQEWLSGMNKEPVLMSLRPGAEPLSPQPLPSERTLSMPTAPTSPHLFNQTESLVAEDGRRPFSLLEEKAPRWAAEHRQEEKKTWLSDGFDIFECPPPKTENELLQMFYRQQDEIRRLRELVTQREVQAKQLELEIRNLRMNSPRL.

WD repeat units lie at residues 80-120 (GHRG…LTKN), 130-170 (GHAR…SVIM), 178-217 (CHQD…VLQE), 220-263 (YKGH…VPVT), and 269-308 (GSSG…PHLN). The stretch at 485–524 (QMFYRQQDEIRRLRELVTQREVQAKQLELEIRNLRMNSPR) forms a coiled coil.

It belongs to the WD repeat coronin family. As to quaternary structure, binds actin. Component of the N-Cor repressor complex, at least composed of NCOR1, NCOR2, HDAC3, TBL1X, TBL1R, CORO2A and GPS2.

The chain is Coronin-2A (CORO2A) from Bos taurus (Bovine).